The sequence spans 250 residues: 5-oxoprolinase subunit A (250 aa).

Belongs to the LamB/PxpA family. In terms of assembly, forms a complex composed of PxpA, PxpB and PxpC.

It carries out the reaction 5-oxo-L-proline + ATP + 2 H2O = L-glutamate + ADP + phosphate + H(+). Functionally, catalyzes the cleavage of 5-oxoproline to form L-glutamate coupled to the hydrolysis of ATP to ADP and inorganic phosphate. This is 5-oxoprolinase subunit A from Paraburkholderia xenovorans (strain LB400).